The following is a 306-amino-acid chain: uncharacterized protein (306 aa).

The next 8 membrane-spanning stretches (helical) occupy residues 7-27 (LESW…GYLA), 30-50 (VGII…FMAL), 68-88 (LFIT…LFAL), 95-115 (ADHV…TLFI), 144-164 (AIGV…LMSF), 194-214 (IGAI…VLSV), 232-252 (IAIM…GLIF), and 274-294 (TIPF…NVAP).

The protein localises to the cell membrane. This is an uncharacterized protein from Mycoplasma genitalium (strain ATCC 33530 / DSM 19775 / NCTC 10195 / G37) (Mycoplasmoides genitalium).